The following is a 496-amino-acid chain: Cobyric acid synthase (496 aa).

A GATase cobBQ-type domain is found at 264 to 458 (HTRIAVVAYP…LHGLFEDAAV (195 aa)). Residue C345 is the Nucleophile of the active site. Residue H450 is part of the active site.

Belongs to the CobB/CobQ family. CobQ subfamily.

Its pathway is cofactor biosynthesis; adenosylcobalamin biosynthesis. Its function is as follows. Catalyzes amidations at positions B, D, E, and G on adenosylcobyrinic A,C-diamide. NH(2) groups are provided by glutamine, and one molecule of ATP is hydrogenolyzed for each amidation. The chain is Cobyric acid synthase from Acidovorax ebreus (strain TPSY) (Diaphorobacter sp. (strain TPSY)).